A 122-amino-acid polypeptide reads, in one-letter code: Large ribosomal subunit protein uL14c (122 aa).

Belongs to the universal ribosomal protein uL14 family. As to quaternary structure, part of the 50S ribosomal subunit.

Its subcellular location is the plastid. The protein resides in the chloroplast. In terms of biological role, binds to 23S rRNA. This Cycas taitungensis (Prince sago) protein is Large ribosomal subunit protein uL14c.